A 468-amino-acid chain; its full sequence is 6-phospho-beta-galactosidase (468 aa).

The D-galactose 6-phosphate site is built by Gln19, His116, Asn159, Glu160, and Asn297. Glu160 serves as the catalytic Proton donor. Glu375 functions as the Nucleophile in the catalytic mechanism. D-galactose 6-phosphate-binding residues include Ser428, Trp429, Lys435, and Tyr437.

Belongs to the glycosyl hydrolase 1 family.

It carries out the reaction a 6-phospho-beta-D-galactoside + H2O = D-galactose 6-phosphate + an alcohol. The protein operates within carbohydrate metabolism; lactose degradation; D-galactose 6-phosphate and beta-D-glucose from lactose 6-phosphate: step 1/1. This chain is 6-phospho-beta-galactosidase, found in Streptococcus mutans serotype c (strain ATCC 700610 / UA159).